Here is a 758-residue protein sequence, read N- to C-terminus: Thiosulfate reductase molybdopterin-containing subunit PhsA (758 aa).

The tat-type signal signal peptide spans 1–30 (MSISRRSFLQGVGIGCSACALGAFPPGALA). The region spanning 41–97 (TTLTPSLCEMCSFRCPIQAQVVNNKTVFIQGNPSAPQQGTRICARGGSGVSLVNDPQ) is the 4Fe-4S Mo/W bis-MGD-type domain. 4 residues coordinate [4Fe-4S] cluster: cysteine 48, cysteine 51, cysteine 55, and cysteine 83.

The protein belongs to the prokaryotic molybdopterin-containing oxidoreductase family. Composed of three subunits: PhsA, PhsB and PhsC. The cofactor is [4Fe-4S] cluster. It depends on Mo-bis(molybdopterin guanine dinucleotide) as a cofactor. Predicted to be exported by the Tat system. The position of the signal peptide cleavage has not been experimentally proven.

Its subcellular location is the periplasm. It carries out the reaction a quinone + hydrogen sulfide + sulfite + 2 H(+) = thiosulfate + a quinol. Its function is as follows. Component of the PhsABC thiosulfate reductase that catalyzes the reduction of thiosulfate to sulfite and hydrogen sulfide, with menaquinol as the sole electron donor. Proton motive force (PMF) is required to drive transmembrane electron transfer within the reductase. The PhsA subunit contains the active site molybdenum-bis(molybdopterin guanine dinucleotide) (Mo-bis-MGD) cofactor. This chain is Thiosulfate reductase molybdopterin-containing subunit PhsA, found in Salmonella typhimurium (strain LT2 / SGSC1412 / ATCC 700720).